We begin with the raw amino-acid sequence, 35 residues long: Mu/omega-theraphotoxin-Tap1a (35 aa).

3 disulfides stabilise this stretch: Cys-3/Cys-18, Cys-10/Cys-23, and Cys-17/Cys-30.

The protein belongs to the neurotoxin 10 (Hwtx-1) family. 59 (Tltx) subfamily. As to expression, expressed by the venom gland.

The protein localises to the secreted. Its function is as follows. Gating-modifier toxin that inhibits both sodium (Nav) and calcium (Cav3) channels by inducing hyperpolarizing shift in voltage-dependence of activation and steady state inactivation. Inhibits Nav1.1/SCN1A, Nav1.2/SCN2A, Nav1.3/SCN3A, Nav1.6/SCN6A, Nav1.7/SCN9A and Cav3.1/CACNA1G sodium and calcium channels at nanomolar concentrations (IC(50)=81-301 nM). Surprisingly, selectively slows fast inactivation of Nav1.3/SCN3A. Also shows moderate inhibition of Cav3.2/CACNA1H calcium channels (IC(50)=1233 nM). Ex vivo, nearly ablates neuronal mechanosensitivity in afferent fibers innervating the colon and the bladder. In vivo, in a mouse model of irritable bowel syndrome, intracolonic administration of the toxin reverses colonic mechanical hypersensitivity. This Theraphosa apophysis (Goliath pinkfoot tarantula) protein is Mu/omega-theraphotoxin-Tap1a.